The primary structure comprises 312 residues: Fibrinogen-like protein 1 (312 aa).

An N-terminal signal peptide occupies residues 1–22 (MAKVFSFILVTTALTMGREISA). A coiled-coil region spans residues 23-61 (LEDCAQEQMRLRAQVRLLETRVKQQQVKIKQLLQENEVQ). One can recognise a Fibrinogen C-terminal domain in the interval 74-306 (LGSKRQYADC…SVVMKIRPND (233 aa)). Cystine bridges form between Cys83/Cys112 and Cys248/Cys261.

Homodimer. Interacts (via the Fibrinogen C-terminal domain) with LAG3 (via Ig-like domains 1 and 2). As to expression, under normal conditions, liver-specific.

The protein resides in the secreted. Its function is as follows. Immune suppressive molecule that inhibits antigen-specific T-cell activation by acting as a major ligand of LAG3. Responsible for LAG3 T-cell inhibitory function. Binds LAG3 independently from MHC class II (MHC-II). Secreted by, and promotes growth of, hepatocytes. This chain is Fibrinogen-like protein 1, found in Homo sapiens (Human).